The following is a 196-amino-acid chain: MQLIQIEKAILPTPWGDFLIFGFEEKKNGKNHIALVYGKIKKNIPILARIHSECLTGDAFFSLRCDCGIQLEMAMSRIASEGNGILIYHRQEGRNIGLLNKIKAYSLQDKGLDTVEANQKLGFSADERDFSLCADIFNILNIKKIRLLTNNPFKVDMLIASGIEIVERIPIIVEKNDKNAHYLKTKAEKMGHLLFK.

Residue arginine 49–glutamate 53 coordinates GTP. Residues cysteine 54, cysteine 65, and cysteine 67 each contribute to the Zn(2+) site. Residues glutamine 70, glutamate 92–arginine 94, and threonine 114 each bind GTP. Catalysis depends on aspartate 126, which acts as the Proton acceptor. Arginine 128 functions as the Nucleophile in the catalytic mechanism. Positions 149 and 154 each coordinate GTP.

This sequence belongs to the GTP cyclohydrolase II family. As to quaternary structure, homodimer. The cofactor is Zn(2+).

The enzyme catalyses GTP + 4 H2O = 2,5-diamino-6-hydroxy-4-(5-phosphoribosylamino)-pyrimidine + formate + 2 phosphate + 3 H(+). Its pathway is cofactor biosynthesis; riboflavin biosynthesis; 5-amino-6-(D-ribitylamino)uracil from GTP: step 1/4. Its function is as follows. Catalyzes the conversion of GTP to 2,5-diamino-6-ribosylamino-4(3H)-pyrimidinone 5'-phosphate (DARP), formate and pyrophosphate. This chain is GTP cyclohydrolase-2, found in Buchnera aphidicola subsp. Schizaphis graminum (strain Sg).